Here is a 296-residue protein sequence, read N- to C-terminus: Probable xyloglucan endotransglucosylase/hydrolase 1 (296 aa).

The first 22 residues, 1–22, serve as a signal peptide directing secretion; that stretch reads MGIIKGVLFSIVLINLSLVVFC. The GH16 domain occupies 23-221; that stretch reads GYPRRPVDVP…WANAPFTASY (199 aa). Glutamate 107 serves as the catalytic Nucleophile. Glutamate 111 (proton donor) is an active-site residue. Residue glutamate 111 coordinates xyloglucan. N-linked (GlcNAc...) asparagine glycosylation occurs at asparagine 115. Xyloglucan contacts are provided by residues 124–126, 134–136, 200–201, and glycine 205; these read QTN, NRE, and DW. 2 disulfides stabilise this stretch: cysteine 229–cysteine 240 and cysteine 277–cysteine 290. A xyloglucan-binding site is contributed by arginine 282.

Belongs to the glycosyl hydrolase 16 family. XTH group 1 subfamily. Post-translationally, contains at least one intrachain disulfide bond essential for its enzymatic activity.

It is found in the secreted. Its subcellular location is the cell wall. It localises to the extracellular space. The protein resides in the apoplast. It catalyses the reaction breaks a beta-(1-&gt;4) bond in the backbone of a xyloglucan and transfers the xyloglucanyl segment on to O-4 of the non-reducing terminal glucose residue of an acceptor, which can be a xyloglucan or an oligosaccharide of xyloglucan.. In terms of biological role, catalyzes xyloglucan endohydrolysis (XEH) and/or endotransglycosylation (XET). Cleaves and religates xyloglucan polymers, an essential constituent of the primary cell wall, and thereby participates in cell wall construction of growing tissues. In Solanum lycopersicum (Tomato), this protein is Probable xyloglucan endotransglucosylase/hydrolase 1 (XTH1).